The sequence spans 151 residues: Protein archease-like (151 aa).

Ca(2+) contacts are provided by Asp20, Asp150, and Ile151.

It belongs to the archease family.

In terms of biological role, component of the tRNA-splicing ligase complex required to facilitate the enzymatic turnover of catalytic subunit RtcB. The polypeptide is Protein archease-like (Dictyostelium discoideum (Social amoeba)).